The sequence spans 129 residues: Follitropin subunit beta (129 aa).

The N-terminal stretch at 1 to 18 (MKSVQFCFLFCCWRVICC) is a signal peptide. 6 disulfide bridges follow: Cys-21–Cys-69, Cys-35–Cys-84, Cys-38–Cys-122, Cys-46–Cys-100, Cys-50–Cys-102, and Cys-105–Cys-112. Residues Asn-25 and Asn-42 are each glycosylated (N-linked (GlcNAc...) asparagine).

This sequence belongs to the glycoprotein hormones subunit beta family. Heterodimer. The active follitropin is a heterodimer composed of an alpha chain/CGA shared with other hormones and a unique beta chain/FSHB shown here.

It localises to the secreted. In terms of biological role, together with the alpha chain CGA constitutes follitropin, the follicle-stimulating hormone, and provides its biological specificity to the hormone heterodimer. Binds FSHR, a G protein-coupled receptor, on target cells to activate downstream signaling pathways. Follitropin is involved in follicle development and spermatogenesis in reproductive organs. The polypeptide is Follitropin subunit beta (FSHB) (Panthera tigris altaica (Siberian tiger)).